The sequence spans 959 residues: Translation initiation factor IF-2 (959 aa).

Basic and acidic residues predominate over residues 1–10 (MSDKTNDDKT). The disordered stretch occupies residues 1 to 374 (MSDKTNDDKT…SQMQETREKI (374 aa)). Positions 27–37 (EQSTVRQNFSH) are enriched in polar residues. Low complexity-rich tracts occupy residues 63–118 (AAAA…VTKP) and 128–138 (QRPGGQQAQRP). Basic and acidic residues-rich tracts occupy residues 154–225 (SEMD…EAAK) and 232–241 (ARSERRDDAR). Positions 246–284 (GARPQQAGRPQGGRPQPAGRPQQGSPRPAPIIADAAPIA) are enriched in low complexity. Residues 318–333 (PEVRAPKVVKGEDDRR) show a composition bias toward basic and acidic residues. In terms of domain architecture, tr-type G spans 457-626 (SRPPVVTIMG…LLQAEMLDLK (170 aa)). The segment at 466 to 473 (GHVDHGKT) is G1. 466–473 (GHVDHGKT) provides a ligand contact to GTP. Residues 491 to 495 (GITQH) are G2. The tract at residues 512-515 (DTPG) is G3. GTP contacts are provided by residues 512–516 (DTPGH) and 566–569 (NKID). A G4 region spans residues 566–569 (NKID). The interval 602–604 (SAK) is G5.

The protein belongs to the TRAFAC class translation factor GTPase superfamily. Classic translation factor GTPase family. IF-2 subfamily.

The protein resides in the cytoplasm. In terms of biological role, one of the essential components for the initiation of protein synthesis. Protects formylmethionyl-tRNA from spontaneous hydrolysis and promotes its binding to the 30S ribosomal subunits. Also involved in the hydrolysis of GTP during the formation of the 70S ribosomal complex. The polypeptide is Translation initiation factor IF-2 (Brucella canis (strain ATCC 23365 / NCTC 10854 / RM-666)).